The primary structure comprises 436 residues: GTPase Der (436 aa).

EngA-type G domains lie at 4 to 167 and 175 to 351; these read PTIA…PAQE and IKFS…ESQN. GTP-binding positions include 10–17, 57–61, 119–122, 181–188, 229–233, and 294–297; these read GRPNVGKS, DTGGI, NKVD, DTAGM, and NKWD. The region spanning 352 to 436 is the KH-like domain; the sequence is TRIPSAVLND…PIHLIARKRK (85 aa).

Belongs to the TRAFAC class TrmE-Era-EngA-EngB-Septin-like GTPase superfamily. EngA (Der) GTPase family. Associates with the 50S ribosomal subunit.

In terms of biological role, GTPase that plays an essential role in the late steps of ribosome biogenesis. This Streptococcus suis (strain 98HAH33) protein is GTPase Der.